Reading from the N-terminus, the 555-residue chain is Potassium-transporting ATPase potassium-binding subunit (555 aa).

A run of 10 helical transmembrane segments spans residues 2 to 22 (IWVA…PTGV), 60 to 80 (QYAL…YFIF), 130 to 150 (IGIT…VMAF), 173 to 193 (VFLP…VPQT), 246 to 266 (MSNI…PFTY), 278 to 298 (ILFV…TTSE), 374 to 394 (AGFV…GLMV), 412 to 432 (LIAV…ALAL), 483 to 503 (LVMF…AASL), and 525 to 545 (GIFI…MLVL).

Belongs to the KdpA family. The system is composed of three essential subunits: KdpA, KdpB and KdpC.

It is found in the cell membrane. Its function is as follows. Part of the high-affinity ATP-driven potassium transport (or Kdp) system, which catalyzes the hydrolysis of ATP coupled with the electrogenic transport of potassium into the cytoplasm. This subunit binds the extracellular potassium ions and delivers the ions to the membrane domain of KdpB through an intramembrane tunnel. This chain is Potassium-transporting ATPase potassium-binding subunit, found in Bacillus cereus (strain B4264).